A 283-amino-acid polypeptide reads, in one-letter code: Extracellular metalloprotease MGG_08041 (283 aa).

A signal peptide spans 1–22 (MQINVVKTFLFALAASSVSALA). Asn-55 carries N-linked (GlcNAc...) asparagine glycosylation. Residue His-197 coordinates Zn(2+). Glu-198 is a catalytic residue. Position 201 (His-201) interacts with Zn(2+). Cysteines 233 and 260 form a disulfide.

The protein belongs to the peptidase M43B family.

Its subcellular location is the secreted. Its function is as follows. Secreted metalloproteinase that allows assimilation of proteinaceous substrates. The sequence is that of Extracellular metalloprotease MGG_08041 from Pyricularia oryzae (strain 70-15 / ATCC MYA-4617 / FGSC 8958) (Rice blast fungus).